We begin with the raw amino-acid sequence, 110 residues long: MTDTLSRLAEVLESRKDAAADSSYVASLYHKGLNKILEKLGEESIETIIAAKDAAVSGDCSDVIYETADLWFHSMVMLAALGQHPQAVLDELDRRFGLSGHTEKAARTAE.

Belongs to the PRA-PH family.

It is found in the cytoplasm. The catalysed reaction is 1-(5-phospho-beta-D-ribosyl)-ATP + H2O = 1-(5-phospho-beta-D-ribosyl)-5'-AMP + diphosphate + H(+). Its pathway is amino-acid biosynthesis; L-histidine biosynthesis; L-histidine from 5-phospho-alpha-D-ribose 1-diphosphate: step 2/9. This is Phosphoribosyl-ATP pyrophosphatase from Pseudomonas syringae pv. tomato (strain ATCC BAA-871 / DC3000).